Here is a 146-residue protein sequence, read N- to C-terminus: General odorant-binding protein 19a (146 aa).

Residues 1 to 22 (MKFHLLLVCVAISLGPIPQSEA) form the signal peptide. 3 disulfides stabilise this stretch: Cys40/Cys72, Cys68/Cys126, and Cys113/Cys135.

This sequence belongs to the PBP/GOBP family. In terms of tissue distribution, expressed in adult olfactory system. Expressed exclusively in a subset of chemosensory sensilla on the third antennal segment.

It localises to the secreted. In terms of biological role, present in the aqueous fluid surrounding olfactory sensory dendrites and are thought to aid in the capture and transport of hydrophobic odorants into and through this fluid. This is General odorant-binding protein 19a (Obp19a) from Drosophila melanogaster (Fruit fly).